The sequence spans 123 residues: Methicillin resistance regulatory protein MecI (123 aa).

The H-T-H motif DNA-binding region spans 7–71; that stretch reads EISSAEWEFM…KDNKIFQYYS (65 aa). Residues 74–123 are important for dimerization; the sequence is EESDIKYKTSKNFINKVYKGGFNSLVLNFVEKEDLSQDEIEELRNILNKK.

It belongs to the BlaI transcriptional regulatory family. As to quaternary structure, monomer and homodimer. Post-translationally, upon exposure to beta-lactams, proteolytic cleavage at a single site impairs dimerization and abolishes repressor activity.

The protein localises to the cytoplasm. Transcriptional repressor that constitutively blocks the transcription of the gene for the penicillin-binding protein MecA. Binds DNA as a dimer. The chain is Methicillin resistance regulatory protein MecI (mecI) from Staphylococcus aureus (strain Mu50 / ATCC 700699).